Consider the following 274-residue polypeptide: Triosephosphate isomerase (274 aa).

Residue 31-33 participates in substrate binding; it reads NWK. Catalysis depends on His-118, which acts as the Electrophile. Glu-188 serves as the catalytic Proton acceptor. Residues Gly-194, Ser-234, and 255–256 contribute to the substrate site; that span reads GG.

This sequence belongs to the triosephosphate isomerase family. In terms of assembly, homodimer.

The protein localises to the cytoplasm. The catalysed reaction is D-glyceraldehyde 3-phosphate = dihydroxyacetone phosphate. It participates in carbohydrate biosynthesis; gluconeogenesis. Its pathway is carbohydrate degradation; glycolysis; D-glyceraldehyde 3-phosphate from glycerone phosphate: step 1/1. Functionally, involved in the gluconeogenesis. Catalyzes stereospecifically the conversion of dihydroxyacetone phosphate (DHAP) to D-glyceraldehyde-3-phosphate (G3P). The chain is Triosephosphate isomerase from Chlamydia trachomatis serovar D (strain ATCC VR-885 / DSM 19411 / UW-3/Cx).